A 316-amino-acid polypeptide reads, in one-letter code: Protoheme IX farnesyltransferase (316 aa).

The next 9 helical transmembrane spans lie at Val-32–Asn-52, Pro-53–Leu-73, Ile-93–Phe-113, Val-116–Phe-136, Asn-152–Thr-172, Thr-180–Phe-200, Val-221–Ser-241, Leu-252–Met-271, and Ile-289–Val-309.

Belongs to the UbiA prenyltransferase family. Protoheme IX farnesyltransferase subfamily.

It is found in the cell inner membrane. The enzyme catalyses heme b + (2E,6E)-farnesyl diphosphate + H2O = Fe(II)-heme o + diphosphate. The protein operates within porphyrin-containing compound metabolism; heme O biosynthesis; heme O from protoheme: step 1/1. Functionally, converts heme B (protoheme IX) to heme O by substitution of the vinyl group on carbon 2 of heme B porphyrin ring with a hydroxyethyl farnesyl side group. The polypeptide is Protoheme IX farnesyltransferase (Rhizobium etli (strain ATCC 51251 / DSM 11541 / JCM 21823 / NBRC 15573 / CFN 42)).